The sequence spans 194 residues: Prostaglandin-H2 D-isomerase (194 aa).

Residues 1–24 form the signal peptide; the sequence is MAASHTLWMGLVLLGVLGVLQTRA. The residue at position 25 (Gln25) is a Pyrrolidone carboxylic acid. Residue Asn51 is glycosylated (N-linked (GlcNAc...) asparagine). Cys65 functions as the Nucleophile in the catalytic mechanism. An N-linked (GlcNAc...) asparagine glycan is attached at Asn78. Cys89 and Cys189 form a disulfide bridge.

Belongs to the calycin superfamily. Lipocalin family. As to quaternary structure, monomer. In the male reproductive system, it is expressed in the testis and epididymis, and is secreted into the seminal fluid.

Its subcellular location is the rough endoplasmic reticulum. It localises to the nucleus membrane. The protein localises to the golgi apparatus. The protein resides in the cytoplasm. It is found in the perinuclear region. Its subcellular location is the secreted. The enzyme catalyses prostaglandin H2 = prostaglandin D2. In terms of biological role, catalyzes the conversion of PGH2 to PGD2, a prostaglandin involved in smooth muscle contraction/relaxation and a potent inhibitor of platelet aggregation. Involved in a variety of CNS functions, such as sedation, NREM sleep and PGE2-induced allodynia, and may have an anti-apoptotic role in oligodendrocytes. Binds small non-substrate lipophilic molecules, including biliverdin, bilirubin, retinal, retinoic acid and thyroid hormone, and may act as a scavenger for harmful hydrophobic molecules and as a secretory retinoid and thyroid hormone transporter. Possibly involved in development and maintenance of the blood-brain, blood-retina, blood-aqueous humor and blood-testis barrier. It is likely to play important roles in both maturation and maintenance of the central nervous system and male reproductive system. Involved in PLA2G3-dependent maturation of mast cells. PLA2G3 is secreted by immature mast cells and acts on nearby fibroblasts upstream to PTDGS to synthesize PGD2, which in turn promotes mast cell maturation and degranulation via PTGDR. The protein is Prostaglandin-H2 D-isomerase (PTGDS) of Equus caballus (Horse).